The primary structure comprises 164 residues: LWamide neuropeptides (164 aa).

The propeptide occupies 1-6 (RSADAQ). The tract at residues 1-92 (RSADAQQHGL…WGRSADAQQP (92 aa)) is disordered. 2 positions are modified to tryptophan amide: W11 and W20. Residues 23–27 (SADAQ) constitute a propeptide that is removed on maturation. 2 positions are modified to tryptophan amide: W32 and W41. The propeptide occupies 44–49 (SAEPGQ). Tryptophan amide is present on residues W53 and W62. The propeptide occupies 65–70 (SAEPLQ). W74 and W83 each carry tryptophan amide. Residues 86–90 (SADAQ) constitute a propeptide that is removed on maturation. Tryptophan amide occurs at positions 95, 106, and 115. A propeptide spanning residues 118–123 (SADPGQ) is cleaved from the precursor. 2 positions are modified to tryptophan amide: W127 and W137. Positions 140–164 (SYEPPQFEDLEDLKKKSAIPKPSEQ) are excised as a propeptide.

The protein belongs to the LWamide neuropeptide family.

It localises to the secreted. In terms of biological role, metamorphosin A may be part of an internal signaling system involved in control of metamorphosis. This Actinia equina (Beadlet anemone) protein is LWamide neuropeptides.